We begin with the raw amino-acid sequence, 912 residues long: Phosphatidylinositol-3-phosphatase SAC1 (912 aa).

The tract at residues 1-29 is disordered; that stretch reads MAKSENSTTSTFSSFANKIQPSNDAESDP. The SAC domain occupies 173-575; the sequence is LSSVDLTKDF…GDALAQQYGG (403 aa). The Phosphatase catalytic core motif lies at 511–522; that stretch reads RTNCIDCLDRTN. The required for subcellular localization stretch occupies residues 715–912; the sequence is RPGGNTGSTG…VGDDKVPKVI (198 aa). The tract at residues 740–766 is disordered; that stretch reads LFGSRKPEESSSATKSGADDSEKGVTS.

Component of the PI(3,5)P2 regulatory complex at least composed of ATG18, SAC/FIG4, FAB1 and VAC14. Requires Mg(2+) as cofactor. As to expression, ubiquitous with higher expression level in both young elongating and nonelongating stems. Detected in vascular tissues.

The protein localises to the vacuole membrane. It is found in the golgi apparatus. The enzyme catalyses a 1,2-diacyl-sn-glycero-3-phospho-(1D-myo-inositol-3-phosphate) + H2O = a 1,2-diacyl-sn-glycero-3-phospho-(1D-myo-inositol) + phosphate. It carries out the reaction a 1,2-diacyl-sn-glycero-3-phospho-(1D-myo-inositol-3,5-bisphosphate) + H2O = a 1,2-diacyl-sn-glycero-3-phospho-(1D-myo-inositol-3-phosphate) + phosphate. It catalyses the reaction a 1,2-diacyl-sn-glycero-3-phospho-(1D-myo-inositol 4-phosphate) + H2O = a 1,2-diacyl-sn-glycero-3-phospho-(1D-myo-inositol) + phosphate. In terms of biological role, phosphoinositide phosphatase which catalyzes the hydrolysis of phosphatidylinositol-3,5-bisphosphate (PtdIns(3,5)P2). Can also catalyze the hydrolysis of phosphatidylinositol 3-phosphate (PtdIns(3)P) and phosphatidylinositol 4-phosphate (PtdIns(4)P). Required for normal cell morphogenesis, cell wall synthesis, and actin organization. The protein is Phosphatidylinositol-3-phosphatase SAC1 (SAC1) of Arabidopsis thaliana (Mouse-ear cress).